The following is a 1218-amino-acid chain: DNA polymerase subunit gamma-1 (1218 aa).

The segment at 31–50 (LDPVPSDGRPPSQMPSSENG) is disordered. The short motif at 179-183 (VFDVE) is the Exo I element. Asp181 functions as the Exonuclease activity in the catalytic mechanism. The Exo II motif lies at 250-258 (VGHNVSFDR). Ser289 serves as a coordination point for DNA. The Exo III signature appears at 378 to 386 (YCARDVWAT). Residues 484-524 (KKVKKPASASKLPIEGAGPFGDPMDQEDPGPPSEEEELQRS) form a disordered region. Residues 492 to 553 (ASKLPIEGAG…RPQHLPGHPG (62 aa)) are accessory-interacting determinant. Positions 507 to 520 (MDQEDPGPPSEEEE) are enriched in acidic residues. Arg561 provides a ligand contact to RNA. Ser575 is a binding site for DNA. The RNA site is built by His733, Gly742, and Lys747. The DNA site is built by Lys785 and Thr828. The segment at 837–843 (TWLTASN) is trigger loop. RNA-binding residues include Ser842 and Arg848. Positions 866-875 (VGADVDSQEL) match the Pol A motif. A 2'-deoxyribonucleoside 5'-triphosphate contacts are provided by Asp869, Val870, Ser872, Glu874, Arg922, Lys926, and Tyr930. Residues Asp869 and Val870 each contribute to the Mg(2+) site. Residues 922–937 (REHAKIFNYGRIYGAG) carry the Pol B motif. 2 residues coordinate DNA: Thr1073 and Ser1074. Residues 1113–1120 (HDEVRYLV) carry the Pol C motif. Asp1114 is an a 2'-deoxyribonucleoside 5'-triphosphate binding site. Asp1114 serves as a coordination point for Mg(2+).

The protein belongs to the DNA polymerase type-A family. In terms of assembly, heterotrimer composed of a catalytic subunit and a homodimer of accessory subunits (POLG:POLG2). Interacts with TTC3. Interacts with LIG3. Requires Mg(2+) as cofactor.

Its subcellular location is the mitochondrion. The protein resides in the mitochondrion matrix. It localises to the mitochondrion nucleoid. The enzyme catalyses DNA(n) + a 2'-deoxyribonucleoside 5'-triphosphate = DNA(n+1) + diphosphate. It carries out the reaction a 3'-end 2'-deoxyribonucleotidyl-deoxyribonucleotide-DNA + H2O = a 3'-end 2'-deoxyribonucleotide-DNA + a 2'-deoxyribonucleoside 5'-phosphate + H(+). It catalyses the reaction a 5'-end 2'-deoxyribose-2'-deoxyribonucleotide-DNA = (2E,4S)-4-hydroxypenten-2-al-5-phosphate + a 5'-end 5'-phospho-2'-deoxyribonucleoside-DNA + H(+). Inhibited by dideoxynucleotides such as antiviral agent zalcitabine. Catalytic subunit of DNA polymerase gamma solely responsible for replication of mitochondrial DNA (mtDNA). Replicates both heavy and light strands of the circular mtDNA genome using a single-stranded DNA template, RNA primers and the four deoxyribonucleoside triphosphates as substrates. Has 5' -&gt; 3' polymerase activity. Functionally interacts with TWNK and SSBP1 at the replication fork to form a highly processive replisome, where TWNK unwinds the double-stranded DNA template prior to replication and SSBP1 covers the parental heavy strand to enable continuous replication of the entire mitochondrial genome. A single nucleotide incorporation cycle includes binding of the incoming nucleotide at the insertion site, a phosphodiester bond formation reaction that extends the 3'-end of the primer DNA, and translocation of the primer terminus to the post-insertion site. After completing replication of a mtDNA strand, mediates 3' -&gt; 5' exonucleolytic degradation at the nick to enable proper ligation. Highly accurate due to high nucleotide selectivity and 3' -&gt; 5' exonucleolytic proofreading. Proficiently corrects base substitutions, single-base additions and deletions in non-repetitive sequences and short repeats, but displays lower proofreading activity when replicating longer homopolymeric stretches. Exerts exonuclease activity toward single-stranded DNA and double-stranded DNA containing 3'-terminal mispairs. When a misincorporation occurs, transitions from replication to a pro-nucleolytic editing mode and removes the missincorporated nucleoside in the exonuclease active site. Proceeds via an SN2 nucleolytic mechanism in which Asp-198 catalyzes phosphodiester bond hydrolysis and Glu-200 stabilizes the leaving group. As a result the primer strand becomes one nucleotide shorter and is positioned in the post-insertion site, ready to resume DNA synthesis. Exerts 5'-deoxyribose phosphate (dRP) lyase activity and mediates repair-associated mtDNA synthesis (gap filling) in base-excision repair pathway. Catalyzes the release of the 5'-terminal 2-deoxyribose-5-phosphate sugar moiety from incised apurinic/apyrimidinic (AP) sites to produce a substrate for DNA ligase. The dRP lyase reaction does not require divalent metal ions and likely proceeds via a Schiff base intermediate in a beta-elimination reaction mechanism. This Mus musculus (Mouse) protein is DNA polymerase subunit gamma-1.